The primary structure comprises 815 residues: Protein SMAX1-LIKE 3 (815 aa).

The Clp R domain maps to 8-171 (VEQALTADAA…TKVEQAVSLE (164 aa)). 2 repeat regions span residues 12–80 (LTAD…LNRL) and 99–171 (ISNA…VSLE). Residues 750 to 769 (SRACSPPSNQKSDGSDQPED) form a disordered region. The EAR signature appears at 778–782 (LDLNL).

The protein belongs to the ClpA/ClpB family. Interacts probably with TPL/TPR in an EAR-motif dependent manner. Expressed in roots and seedlings.

Its function is as follows. May function in a transcriptional corepressor complex. The sequence is that of Protein SMAX1-LIKE 3 from Arabidopsis thaliana (Mouse-ear cress).